Here is a 264-residue protein sequence, read N- to C-terminus: Proteasome subunit beta type-5 (264 aa).

Positions 1–59 (MALASVLQRPMPVNQHGFFGLGGGADLLDLGPGSPGDGLSLAAPSWGVPEEPRIEMLHG) are cleaved as a propeptide — removed in mature form. The active-site Nucleophile is threonine 60. Residue alanine 108 coordinates bortezomib.

The protein belongs to the peptidase T1B family. As to quaternary structure, the 26S proteasome consists of a 20S proteasome core and two 19S regulatory subunits. The 20S proteasome core is a barrel-shaped complex made of 28 subunits that are arranged in four stacked rings. The two outer rings are each formed by seven alpha subunits, and the two inner rings are formed by seven beta subunits. The proteolytic activity is exerted by three beta-subunits PSMB5, PSMB6 and PSMB7. Directly interacts with POMP. Interacts with ABCB1 and TAP1. Expressed in uterus at the embryo implantation site.

The protein localises to the cytoplasm. Its subcellular location is the nucleus. The enzyme catalyses Cleavage of peptide bonds with very broad specificity.. Its function is as follows. Component of the 20S core proteasome complex involved in the proteolytic degradation of most intracellular proteins. This complex plays numerous essential roles within the cell by associating with different regulatory particles. Associated with two 19S regulatory particles, forms the 26S proteasome and thus participates in the ATP-dependent degradation of ubiquitinated proteins. The 26S proteasome plays a key role in the maintenance of protein homeostasis by removing misfolded or damaged proteins that could impair cellular functions, and by removing proteins whose functions are no longer required. Associated with the PA200 or PA28, the 20S proteasome mediates ubiquitin-independent protein degradation. This type of proteolysis is required in several pathways including spermatogenesis (20S-PA200 complex) or generation of a subset of MHC class I-presented antigenic peptides (20S-PA28 complex). Within the 20S core complex, PSMB5 displays a chymotrypsin-like activity. This chain is Proteasome subunit beta type-5 (Psmb5), found in Mus musculus (Mouse).